Here is a 395-residue protein sequence, read N- to C-terminus: MTLPTDPAQNLASLIRCRSVTPVEGGALTALEAMLRPLGARVDRPVFSEEGEADVENLYARIGKDGPHLMFAGHTDVVPPGDEDAWTHPPFAAEIAGGEMFGRGAVDMKGGIACFVAALARHLEVSGTPKGSVSFLITGDEEGPSVNGSVKLLEWAAARGERWDAALVGEPTNVETLGDMVKIGRRGSLSGRITLFGRQGHVAYPHLADNPSRGLVALLEALMEPAFDQGTADFPPTNLEITTIDVGNPSVNVIPARATAAFNVRFNDTWSVETLQAEIHNRLDRAAAENRLRPGRTEPVSFELEWRDRPSPVFLTRDDKLVATLAASIEAVTGRKPQLSTTGGTSDARFIKDYCPVIEFGLVGQTMHMVDEKVPLSDLETLTRIYQRFLENWFS.

Residue His-74 participates in Zn(2+) binding. Asp-76 is a catalytic residue. Residue Asp-107 coordinates Zn(2+). Glu-141 (proton acceptor) is an active-site residue. Zn(2+) is bound by residues Glu-142, Glu-170, and His-368.

It belongs to the peptidase M20A family. DapE subfamily. Homodimer. Zn(2+) serves as cofactor. It depends on Co(2+) as a cofactor.

The catalysed reaction is N-succinyl-(2S,6S)-2,6-diaminopimelate + H2O = (2S,6S)-2,6-diaminopimelate + succinate. It participates in amino-acid biosynthesis; L-lysine biosynthesis via DAP pathway; LL-2,6-diaminopimelate from (S)-tetrahydrodipicolinate (succinylase route): step 3/3. Catalyzes the hydrolysis of N-succinyl-L,L-diaminopimelic acid (SDAP), forming succinate and LL-2,6-diaminopimelate (DAP), an intermediate involved in the bacterial biosynthesis of lysine and meso-diaminopimelic acid, an essential component of bacterial cell walls. The protein is Succinyl-diaminopimelate desuccinylase of Chelativorans sp. (strain BNC1).